We begin with the raw amino-acid sequence, 199 residues long: Recombination protein RecR (199 aa).

The C4-type zinc finger occupies cysteine 58–cysteine 73. One can recognise a Toprim domain in the interval serine 81 to proline 176.

The protein belongs to the RecR family.

May play a role in DNA repair. It seems to be involved in an RecBC-independent recombinational process of DNA repair. It may act with RecF and RecO. This Desulforapulum autotrophicum (strain ATCC 43914 / DSM 3382 / VKM B-1955 / HRM2) (Desulfobacterium autotrophicum) protein is Recombination protein RecR.